The sequence spans 330 residues: Aspartate--ammonia ligase (330 aa).

Belongs to the class-II aminoacyl-tRNA synthetase family. AsnA subfamily. As to quaternary structure, homodimer.

The protein localises to the cytoplasm. The enzyme catalyses L-aspartate + NH4(+) + ATP = L-asparagine + AMP + diphosphate + H(+). It functions in the pathway amino-acid biosynthesis; L-asparagine biosynthesis; L-asparagine from L-aspartate (ammonia route): step 1/1. The sequence is that of Aspartate--ammonia ligase from Salmonella typhimurium (strain LT2 / SGSC1412 / ATCC 700720).